Here is a 302-residue protein sequence, read N- to C-terminus: Oxygen-dependent coproporphyrinogen-III oxidase (302 aa).

Residue serine 94 participates in substrate binding. 2 residues coordinate a divalent metal cation: histidine 98 and histidine 108. Histidine 108 (proton donor) is an active-site residue. Position 110–112 (110–112) interacts with substrate; sequence NVR. A divalent metal cation contacts are provided by histidine 147 and histidine 177. An important for dimerization region spans residues 242 to 277; that stretch reads YVEFNLVFDRGTLFGLQSGGRAESILMSMPPVANWR. A substrate-binding site is contributed by 260 to 262; that stretch reads GGR.

The protein belongs to the aerobic coproporphyrinogen-III oxidase family. Homodimer. A divalent metal cation serves as cofactor.

Its subcellular location is the cytoplasm. The enzyme catalyses coproporphyrinogen III + O2 + 2 H(+) = protoporphyrinogen IX + 2 CO2 + 2 H2O. It participates in porphyrin-containing compound metabolism; protoporphyrin-IX biosynthesis; protoporphyrinogen-IX from coproporphyrinogen-III (O2 route): step 1/1. Its function is as follows. Involved in the heme biosynthesis. Catalyzes the aerobic oxidative decarboxylation of propionate groups of rings A and B of coproporphyrinogen-III to yield the vinyl groups in protoporphyrinogen-IX. This chain is Oxygen-dependent coproporphyrinogen-III oxidase, found in Ralstonia pickettii (strain 12J).